Reading from the N-terminus, the 76-residue chain is RNA-binding protein KhpA (76 aa).

The 47-residue stretch at 30–76 (GEVLEVRVNPEDLGRVIGRSGRTAKALRTLVTALADGRRVRVDVVDD) folds into the KH domain.

The protein belongs to the KhpA RNA-binding protein family.

Its subcellular location is the cytoplasm. Its function is as follows. A probable RNA-binding protein. The polypeptide is RNA-binding protein KhpA (Leifsonia xyli subsp. xyli (strain CTCB07)).